Reading from the N-terminus, the 927-residue chain is Translation initiation factor IF-2 (927 aa).

Positions 27 to 337 (LGLPVKSHAS…GAPKPVTERK (311 aa)) are disordered. Residues 49-69 (SFSSSKTKAPTNSVQTNQGVK) show a composition bias toward polar residues. Composition is skewed to basic and acidic residues over residues 70 to 86 (TESK…DDKP) and 101 to 138 (FKAE…DRRH). Residues 146–159 (GNRNDNRQGQQNNR) show a composition bias toward low complexity. Basic and acidic residues-rich tracts occupy residues 160–171 (NKNDGRYADHKQ), 202–226 (YSRH…EQEL), and 234–257 (AQEE…KEIV). Positions 300-316 (NWNNQNQVRNQRNSNWN) are enriched in low complexity. A tr-type G domain is found at 428 to 597 (ERPPVVTIMG…LLVAEMEELK (170 aa)). Positions 437–444 (GHVDHGKT) are G1. Residue 437-444 (GHVDHGKT) participates in GTP binding. Residues 462–466 (GITQH) form a G2 region. Positions 483–486 (DTPG) are G3. GTP is bound by residues 483-487 (DTPGH) and 537-540 (NKID). The tract at residues 537 to 540 (NKID) is G4. The interval 573–575 (SAK) is G5.

The protein belongs to the TRAFAC class translation factor GTPase superfamily. Classic translation factor GTPase family. IF-2 subfamily.

The protein resides in the cytoplasm. One of the essential components for the initiation of protein synthesis. Protects formylmethionyl-tRNA from spontaneous hydrolysis and promotes its binding to the 30S ribosomal subunits. Also involved in the hydrolysis of GTP during the formation of the 70S ribosomal complex. In Streptococcus agalactiae serotype V (strain ATCC BAA-611 / 2603 V/R), this protein is Translation initiation factor IF-2.